A 234-amino-acid polypeptide reads, in one-letter code: DNA repair protein RecO (234 aa).

Belongs to the RecO family.

Functionally, involved in DNA repair and RecF pathway recombination. This is DNA repair protein RecO from Alteromonas mediterranea (strain DSM 17117 / CIP 110805 / LMG 28347 / Deep ecotype).